Reading from the N-terminus, the 56-residue chain is Large ribosomal subunit protein bL32 (56 aa).

The interval 1–37 (MAVQQNKPTRSKRGMRRSHDALTAPLLSVDKTSGETH) is disordered.

It belongs to the bacterial ribosomal protein bL32 family.

In Photorhabdus laumondii subsp. laumondii (strain DSM 15139 / CIP 105565 / TT01) (Photorhabdus luminescens subsp. laumondii), this protein is Large ribosomal subunit protein bL32.